We begin with the raw amino-acid sequence, 2360 residues long: DNA (cytosine-5-)-methyltransferase DMT5 (2360 aa).

An SAM-dependent MTase C5-type domain is found at 48–507 (FTVGTMCSGT…LCILIAERQV (460 aa)). The active site involves Cys146. Positions 1258 to 1575 (AEVVNRARGG…CAIADLVNMH (318 aa)) constitute a Helicase ATP-binding domain. 1271-1278 (HDVGFGKT) lines the ATP pocket. The segment at 1451–1498 (SRRKDQKSKATARTQRAKKKSKKPRRTAAAAAESDHSAESDSDSAMDD) is disordered. Positions 1465–1476 (QRAKKKSKKPRR) are enriched in basic residues. The RING-type; degenerate zinc-finger motif lies at 2018–2070 (CSVCGSQDNTEMKDLSLFITCGHLLCSGCVAAHEHQHGQAESTTGEVLCPVDS). In terms of domain architecture, Helicase C-terminal spans 2102–2267 (KVMKILDVIR…RMPLDDLDYK (166 aa)).

The protein in the N-terminal section; belongs to the class I-like SAM-binding methyltransferase superfamily. C5-methyltransferase family. This sequence in the C-terminal section; belongs to the SNF2/RAD54 helicase family.

It localises to the nucleus. Its subcellular location is the chromosome. The enzyme catalyses a 2'-deoxycytidine in DNA + S-adenosyl-L-methionine + ATP + H2O = a 5-methyl-2'-deoxycytidine in DNA + S-adenosyl-L-homocysteine + ADP + phosphate + 2 H(+). Functionally, may play a role in cytosine methylation at palindromic 5'-CG-3' and 5'-C[ACT]G-3' sites in DNA. This chain is DNA (cytosine-5-)-methyltransferase DMT5, found in Verticillium dahliae (strain VdLs.17 / ATCC MYA-4575 / FGSC 10137) (Verticillium wilt).